The following is a 118-amino-acid chain: Large ribosomal subunit protein bL20c (118 aa).

Belongs to the bacterial ribosomal protein bL20 family.

The protein resides in the plastid. The protein localises to the chloroplast. In terms of biological role, binds directly to 23S ribosomal RNA and is necessary for the in vitro assembly process of the 50S ribosomal subunit. It is not involved in the protein synthesizing functions of that subunit. The chain is Large ribosomal subunit protein bL20c from Gracilaria tenuistipitata var. liui (Red alga).